Reading from the N-terminus, the 459-residue chain is NADH oxidase (459 aa).

N10 serves as a coordination point for FAD. The active-site Proton acceptor is H11. Positions 12, 34, 35, 44, 81, 110, 113, 143, and 172 each coordinate FAD. Residue C44 is the Redox-active of the active site. C44 bears the Cysteine sulfinic acid (-SO2H) mark. NAD(+)-binding residues include I173, D192, Y201, and G256. Position 294 (D294) interacts with FAD. Position 310 (A310) interacts with NAD(+). L311, A312, and S313 together coordinate FAD. G341 contacts NAD(+). Residue F439 participates in FAD binding.

It belongs to the class-III pyridine nucleotide-disulfide oxidoreductase family. The cofactor is FAD.

It localises to the secreted. The protein resides in the cell wall. The catalysed reaction is 2 NADH + O2 + 2 H(+) = 2 NAD(+) + 2 H2O. Catalyzes the four-electron reduction of molecular oxygen to water. Plays a role in redox balance maintenance. May be involved in mediating bacterial adhesion to host cells. May be considered a potential virulence factor. The sequence is that of NADH oxidase from Streptococcus pneumoniae (strain ATCC BAA-255 / R6).